A 248-amino-acid chain; its full sequence is Tyrosine recombinase XerD-like (248 aa).

Residues 1–72 form the Core-binding (CB) domain; the sequence is MKSYIEPFIA…TANQFLYYLY (72 aa). The Tyr recombinase domain occupies 85-248; it reads DTMKVMRTEK…PVTLEKYYKS (164 aa). Active-site residues include lysine 149 and arginine 213. Catalysis depends on tyrosine 245, which acts as the O-(3'-phospho-DNA)-tyrosine intermediate.

Belongs to the 'phage' integrase family. XerD-like subfamily.

The protein localises to the cytoplasm. Functionally, putative tyrosine recombinase. Not involved in the cutting and rejoining of the recombining DNA molecules on dif(SL) site. This chain is Tyrosine recombinase XerD-like, found in Streptococcus pyogenes serotype M4 (strain MGAS10750).